The primary structure comprises 291 residues: Co-chaperone protein DjlA (291 aa).

At 1–6 (MRYWGK) the chain is on the periplasmic side. The chain crosses the membrane as a helical span at residues 7–31 (LLGLALGIVSSTGIWGMIMGLLMGH). Residues 32 to 291 (WIDRARASRR…ELLKSANQTK (260 aa)) lie on the Cytoplasmic side of the membrane. The interval 177-223 (ESPTGQQSRQNQSRQNGKSQQRRNNGYSNGHSYGGQRPPSPLRGPTV) is disordered. Over residues 181–211 (GQQSRQNQSRQNGKSQQRRNNGYSNGHSYGG) the composition is skewed to low complexity. Residues 225–291 (SACRTLGVRS…ELLKSANQTK (67 aa)) enclose the J domain.

Homodimer.

Its subcellular location is the cell inner membrane. Functionally, regulatory DnaK co-chaperone. Direct interaction between DnaK and DjlA is needed for the induction of the wcaABCDE operon, involved in the synthesis of a colanic acid polysaccharide capsule, possibly through activation of the RcsB/RcsC phosphotransfer signaling pathway. The colanic acid capsule may help the bacterium survive conditions outside the host. This Pectobacterium atrosepticum (strain SCRI 1043 / ATCC BAA-672) (Erwinia carotovora subsp. atroseptica) protein is Co-chaperone protein DjlA.